The sequence spans 504 residues: ATP synthase subunit alpha, chloroplastic (504 aa).

Residue 169–176 (GDRQTGKT) coordinates ATP.

The protein belongs to the ATPase alpha/beta chains family. As to quaternary structure, F-type ATPases have 2 components, CF(1) - the catalytic core - and CF(0) - the membrane proton channel. CF(1) has five subunits: alpha(3), beta(3), gamma(1), delta(1), epsilon(1). CF(0) has four main subunits: a, b, b' and c.

It is found in the plastid. The protein resides in the chloroplast thylakoid membrane. It catalyses the reaction ATP + H2O + 4 H(+)(in) = ADP + phosphate + 5 H(+)(out). Its function is as follows. Produces ATP from ADP in the presence of a proton gradient across the membrane. The alpha chain is a regulatory subunit. This Stigeoclonium helveticum (Green alga) protein is ATP synthase subunit alpha, chloroplastic.